We begin with the raw amino-acid sequence, 305 residues long: NADH-cytochrome b5 reductase 1 (305 aa).

Residues 8-28 form a helical membrane-spanning segment; that stretch reads VLLASLGVGLFTLFGLALGTY. In terms of domain architecture, FAD-binding FR-type spans 44–156; that stretch reads DEKYLLRLLD…RGPSGLLSYA (113 aa). FAD-binding positions include 136–166 and 175–210; these read DSLKIGDVVEFRGPSGLLSYAGKGNFNIQPN and VAKKLGMIAGGTGITPMLQLIRAILKVPEDPTQCFL.

This sequence belongs to the flavoprotein pyridine nucleotide cytochrome reductase family. The cofactor is FAD.

The protein localises to the membrane. It catalyses the reaction 2 Fe(III)-[cytochrome b5] + NADH = 2 Fe(II)-[cytochrome b5] + NAD(+) + H(+). In terms of biological role, NADH-cytochrome b5 reductases are involved in desaturation and elongation of fatty acids, cholesterol biosynthesis, drug metabolism, and, in erythrocyte, methemoglobin reduction. This Rattus norvegicus (Rat) protein is NADH-cytochrome b5 reductase 1 (Cyb5r1).